Consider the following 292-residue polypeptide: Homoserine kinase (292 aa).

Residue 84 to 94 (PLSRGLGSSSA) coordinates ATP.

It belongs to the GHMP kinase family. Homoserine kinase subfamily.

The protein localises to the cytoplasm. The enzyme catalyses L-homoserine + ATP = O-phospho-L-homoserine + ADP + H(+). It participates in amino-acid biosynthesis; L-threonine biosynthesis; L-threonine from L-aspartate: step 4/5. Catalyzes the ATP-dependent phosphorylation of L-homoserine to L-homoserine phosphate. The protein is Homoserine kinase of Campylobacter jejuni subsp. jejuni serotype O:23/36 (strain 81-176).